Here is an 82-residue protein sequence, read N- to C-terminus: uncharacterized protein (82 aa).

The next 2 helical transmembrane spans lie at 8–28 (LTTAAGILLMAFLSCLLLPAP) and 50–70 (LYTLLFCLWFLVLGAIEYFVL).

It localises to the cell membrane. This is an uncharacterized protein from Escherichia coli (strain K12).